We begin with the raw amino-acid sequence, 407 residues long: Phosphopentomutase (407 aa).

The Mn(2+) site is built by Asp-10, Asp-306, His-311, Asp-347, His-348, and His-359.

The protein belongs to the phosphopentomutase family. Mn(2+) is required as a cofactor.

Its subcellular location is the cytoplasm. It carries out the reaction 2-deoxy-alpha-D-ribose 1-phosphate = 2-deoxy-D-ribose 5-phosphate. The enzyme catalyses alpha-D-ribose 1-phosphate = D-ribose 5-phosphate. The protein operates within carbohydrate degradation; 2-deoxy-D-ribose 1-phosphate degradation; D-glyceraldehyde 3-phosphate and acetaldehyde from 2-deoxy-alpha-D-ribose 1-phosphate: step 1/2. Its function is as follows. Isomerase that catalyzes the conversion of deoxy-ribose 1-phosphate (dRib-1-P) and ribose 1-phosphate (Rib-1-P) to deoxy-ribose 5-phosphate (dRib-5-P) and ribose 5-phosphate (Rib-5-P), respectively. This is Phosphopentomutase from Salmonella arizonae (strain ATCC BAA-731 / CDC346-86 / RSK2980).